The primary structure comprises 214 residues: Thymidylate kinase (214 aa).

10-17 contributes to the ATP binding site; that stretch reads GGEGAGKS.

Belongs to the thymidylate kinase family.

The catalysed reaction is dTMP + ATP = dTDP + ADP. In terms of biological role, phosphorylation of dTMP to form dTDP in both de novo and salvage pathways of dTTP synthesis. The chain is Thymidylate kinase from Brucella suis (strain ATCC 23445 / NCTC 10510).